The primary structure comprises 306 residues: Ribosomal protein L11 methyltransferase (306 aa).

Residues Thr152, Gly179, Asp201, and Asn243 each coordinate S-adenosyl-L-methionine.

This sequence belongs to the methyltransferase superfamily. PrmA family.

The protein localises to the cytoplasm. It carries out the reaction L-lysyl-[protein] + 3 S-adenosyl-L-methionine = N(6),N(6),N(6)-trimethyl-L-lysyl-[protein] + 3 S-adenosyl-L-homocysteine + 3 H(+). In terms of biological role, methylates ribosomal protein L11. In Citrifermentans bemidjiense (strain ATCC BAA-1014 / DSM 16622 / JCM 12645 / Bem) (Geobacter bemidjiensis), this protein is Ribosomal protein L11 methyltransferase.